Reading from the N-terminus, the 341-residue chain is S-adenosylmethionine:tRNA ribosyltransferase-isomerase (341 aa).

The protein belongs to the QueA family. In terms of assembly, monomer.

Its subcellular location is the cytoplasm. It carries out the reaction 7-aminomethyl-7-carbaguanosine(34) in tRNA + S-adenosyl-L-methionine = epoxyqueuosine(34) in tRNA + adenine + L-methionine + 2 H(+). Its pathway is tRNA modification; tRNA-queuosine biosynthesis. Functionally, transfers and isomerizes the ribose moiety from AdoMet to the 7-aminomethyl group of 7-deazaguanine (preQ1-tRNA) to give epoxyqueuosine (oQ-tRNA). The sequence is that of S-adenosylmethionine:tRNA ribosyltransferase-isomerase from Chlorobium phaeobacteroides (strain DSM 266 / SMG 266 / 2430).